We begin with the raw amino-acid sequence, 285 residues long: Sulfotransferase 2A6 (285 aa).

Residue 44-49 coordinates 3'-phosphoadenylyl sulfate; the sequence is KSGTNW. H99 acts as the Proton acceptor in catalysis. 3'-phosphoadenylyl sulfate is bound by residues R121, S129, Y184, 218–223, and 247–249; these read SSFQAM and RKG.

This sequence belongs to the sulfotransferase 1 family. As to quaternary structure, oligomer.

It localises to the cytoplasm. The protein resides in the cytosol. It catalyses the reaction an alcohol + 3'-phosphoadenylyl sulfate = an alkyl sulfate + adenosine 3',5'-bisphosphate + H(+). The catalysed reaction is glycolithocholate + 3'-phosphoadenylyl sulfate = sulfoglycolithocholate + adenosine 3',5'-bisphosphate + H(+). The enzyme catalyses taurolithocholate + 3'-phosphoadenylyl sulfate = taurolithocholate 3-sulfate + adenosine 3',5'-bisphosphate + H(+). It carries out the reaction 3beta-hydroxyandrost-5-en-17-one + 3'-phosphoadenylyl sulfate = dehydroepiandrosterone 3-sulfate + adenosine 3',5'-bisphosphate + H(+). In terms of biological role, sulfotransferase that utilizes 3'-phospho-5'-adenylyl sulfate (PAPS) as sulfonate donor to catalyze the sulfonation of the hydroxyl group of hydroxysteroids and bile acids. The sequence is that of Sulfotransferase 2A6 from Mus musculus (Mouse).